A 351-amino-acid polypeptide reads, in one-letter code: C(7)-cyclitol 7-kinase (351 aa).

This sequence belongs to the ROK (NagC/XylR) family.

The enzyme catalyses valienone + ATP = valienone 7-phosphate + ADP + H(+). It carries out the reaction validone + ATP = validone 7-phosphate + ADP + H(+). Involved in the biosynthesis of the antifungal agent validamycin A. Catalyzes the phosphorylation of valienone and validone to their 7-phosphate derivatives. The sequence is that of C(7)-cyclitol 7-kinase from Streptomyces hygroscopicus subsp. limoneus.